A 260-amino-acid polypeptide reads, in one-letter code: Ribosome maturation factor RimP (260 aa).

Basic and acidic residues-rich tracts occupy residues 189-199 (RRGRDAEREQL) and 215-227 (AREM…PRKE). The disordered stretch occupies residues 189 to 260 (RRGRDAEREQ…QTTSDPHQGE (72 aa)). Positions 228 to 242 (KTAKKPLPKNTKAHR) are enriched in basic residues.

This sequence belongs to the RimP family.

It localises to the cytoplasm. Its function is as follows. Required for maturation of 30S ribosomal subunits. The sequence is that of Ribosome maturation factor RimP from Afipia carboxidovorans (strain ATCC 49405 / DSM 1227 / KCTC 32145 / OM5) (Oligotropha carboxidovorans).